The following is a 150-amino-acid chain: Protein SprT-like (150 aa).

In terms of domain architecture, SprT-like spans Glu11 to Glu149. His70 lines the Zn(2+) pocket. The active site involves Glu71. His74 provides a ligand contact to Zn(2+).

It belongs to the SprT family. Requires Zn(2+) as cofactor.

Its subcellular location is the cytoplasm. The chain is Protein SprT-like from Oceanobacillus iheyensis (strain DSM 14371 / CIP 107618 / JCM 11309 / KCTC 3954 / HTE831).